The sequence spans 96 residues: Large ribosomal subunit protein bL25 (96 aa).

The protein belongs to the bacterial ribosomal protein bL25 family. In terms of assembly, part of the 50S ribosomal subunit; part of the 5S rRNA/L5/L18/L25 subcomplex. Contacts the 5S rRNA. Binds to the 5S rRNA independently of L5 and L18.

This is one of the proteins that binds to the 5S RNA in the ribosome where it forms part of the central protuberance. This chain is Large ribosomal subunit protein bL25, found in Francisella philomiragia subsp. philomiragia (strain ATCC 25017 / CCUG 19701 / FSC 153 / O#319-036).